Here is a 1395-residue protein sequence, read N- to C-terminus: DNA-directed RNA polymerase subunit beta' (1395 aa).

Cys-70, Cys-72, Cys-85, and Cys-88 together coordinate Zn(2+). Mg(2+)-binding residues include Asp-460, Asp-462, and Asp-464. The Zn(2+) site is built by Cys-814, Cys-888, Cys-895, and Cys-898.

The protein belongs to the RNA polymerase beta' chain family. As to quaternary structure, the RNAP catalytic core consists of 2 alpha, 1 beta, 1 beta' and 1 omega subunit. When a sigma factor is associated with the core the holoenzyme is formed, which can initiate transcription. The cofactor is Mg(2+). It depends on Zn(2+) as a cofactor.

The catalysed reaction is RNA(n) + a ribonucleoside 5'-triphosphate = RNA(n+1) + diphosphate. DNA-dependent RNA polymerase catalyzes the transcription of DNA into RNA using the four ribonucleoside triphosphates as substrates. In Pseudoalteromonas atlantica (strain T6c / ATCC BAA-1087), this protein is DNA-directed RNA polymerase subunit beta'.